Here is a 394-residue protein sequence, read N- to C-terminus: Elongation factor Tu (394 aa).

Positions 10–204 constitute a tr-type G domain; the sequence is KPHVNVGTIG…HLDTYIPEPE (195 aa). The interval 19–26 is G1; that stretch reads GHVDHGKT. 19–26 provides a ligand contact to GTP; that stretch reads GHVDHGKT. Threonine 26 is a binding site for Mg(2+). The tract at residues 60–64 is G2; it reads GITIN. The interval 81 to 84 is G3; it reads DCPG. Residues 81-85 and 136-139 each bind GTP; these read DCPGH and NKCD. A G4 region spans residues 136–139; sequence NKCD. A G5 region spans residues 174 to 176; the sequence is SAL.

It belongs to the TRAFAC class translation factor GTPase superfamily. Classic translation factor GTPase family. EF-Tu/EF-1A subfamily. As to quaternary structure, monomer.

Its subcellular location is the cytoplasm. It catalyses the reaction GTP + H2O = GDP + phosphate + H(+). In terms of biological role, GTP hydrolase that promotes the GTP-dependent binding of aminoacyl-tRNA to the A-site of ribosomes during protein biosynthesis. This Klebsiella pneumoniae subsp. pneumoniae (strain ATCC 700721 / MGH 78578) protein is Elongation factor Tu.